Reading from the N-terminus, the 86-residue chain is Small ribosomal subunit protein bS16 (86 aa).

The protein belongs to the bacterial ribosomal protein bS16 family.

The polypeptide is Small ribosomal subunit protein bS16 (Legionella pneumophila (strain Paris)).